The chain runs to 356 residues: CMP-sialic acid transporter 2 (356 aa).

Over residues 1 to 24 the composition is skewed to basic and acidic residues; it reads MEYRRVKDQESYDVVSQKDIESPG. Residues 1–44 form a disordered region; the sequence is MEYRRVKDQESYDVVSQKDIESPGERSLSSTSATSSLSTAGASK. The Cytoplasmic segment spans residues 1–52; sequence MEYRRVKDQESYDVVSQKDIESPGERSLSSTSATSSLSTAGASKGKNSWKLK. Over residues 27–44 the composition is skewed to low complexity; the sequence is SLSSTSATSSLSTAGASK. A helical transmembrane segment spans residues 53 to 73; the sequence is SIVTLALTLLTSSQAILIVWS. The Lumenal portion of the chain corresponds to 74–82; sequence KRAGKYEYS. A helical transmembrane segment spans residues 83–103; sequence VTTANFSVEALKCLLSLIALY. Residues 104–125 are Cytoplasmic-facing; it reads RTWNSQGVTEDNRLSTSFDEVS. Residues 126–146 traverse the membrane as a helical segment; the sequence is VYPIPAILYMVKNLLQYYIFA. At 147–149 the chain is on the lumenal side; sequence YVD. A helical transmembrane segment spans residues 150–172; it reads APAYQILKNLNIISTGVLYRIIL. Residues 173–175 are Cytoplasmic-facing; that stretch reads KKK. The chain crosses the membrane as a helical span at residues 176 to 196; sequence LSEIQWAAFILLCAGCTTAQL. At 197 to 211 the chain is on the lumenal side; the sequence is NPSSDHVLQTPIQGW. A helical membrane pass occupies residues 212-232; it reads VMAIVMALLSGFAGVYTEAII. At 233-239 the chain is on the cytoplasmic side; sequence KKRPSRN. The chain crosses the membrane as a helical span at residues 240–260; that stretch reads INVQNFWLYIFGMLFNLVAIC. Residues 261–277 are Lumenal-facing; the sequence is VQDFDAVMNKGFFHGYS. A helical transmembrane segment spans residues 278 to 298; it reads FITVLMILNHALSGIAVSMVM. The Cytoplasmic portion of the chain corresponds to 299–314; the sequence is KYADNIVKVYSTSVAM. A helical membrane pass occupies residues 315–335; sequence LLTAVVSVFLFGFHLSLAFFL. At 336-356 the chain is on the lumenal side; sequence GSTVVSVSVYLHSVGKPQPQK.

This sequence belongs to the nucleotide-sugar transporter family. CMP-Sialate:CMP antiporter (TC 2.A.7.12) subfamily. As to expression, expressed in roots, leaves and stalks.

It is found in the golgi apparatus membrane. Its function is as follows. Sugar transporter involved in the transport of CMP-sialic acid from the cytoplasm into the Golgi. May transport important nucleotide sugars such as CMP-Kdo (2-keto-3-deoxy-D-manno-octulosonic acid) in physiological conditions. In Oryza sativa subsp. japonica (Rice), this protein is CMP-sialic acid transporter 2.